The following is a 213-amino-acid chain: Transcriptional regulatory protein CrdR (213 aa).

The region spanning 4 to 119 is the Response regulatory domain; the sequence is KIFLLEDDYL…ELEARIKRFF (116 aa). D53 carries the 4-aspartylphosphate modification. The ompR/PhoB-type DNA-binding region spans 121–212; the sequence is DDPIEIMPNI…HKGVGYRFNP (92 aa).

In terms of processing, phosphorylated by CrdS.

In terms of biological role, member of the two-component regulatory system CrdR/CrdS that induces the transcriptional induction of the copper resistance determinant CrdA. Upon phosphorylation by CrdS, functions as a transcriptional regulator by direct binding to promoter regions of target genes including the crdA promoter or nitric oxide-responsive gene promoters. The sequence is that of Transcriptional regulatory protein CrdR from Helicobacter pylori (strain ATCC 700392 / 26695) (Campylobacter pylori).